The sequence spans 283 residues: ATP synthase gamma chain (283 aa).

Belongs to the ATPase gamma chain family. F-type ATPases have 2 components, CF(1) - the catalytic core - and CF(0) - the membrane proton channel. CF(1) has five subunits: alpha(3), beta(3), gamma(1), delta(1), epsilon(1). CF(0) has three main subunits: a, b and c.

The protein localises to the cell membrane. In terms of biological role, produces ATP from ADP in the presence of a proton gradient across the membrane. The gamma chain is believed to be important in regulating ATPase activity and the flow of protons through the CF(0) complex. This is ATP synthase gamma chain from Clostridium beijerinckii (strain ATCC 51743 / NCIMB 8052) (Clostridium acetobutylicum).